The sequence spans 334 residues: HTH-type transcriptional repressor PurR (334 aa).

The HTH lacI-type domain occupies 2–56 (ATIKDVAKMAGVSTTTVSHVINKTRHVADETKQTVLDAIKALNYSPSAVARSLKV). Residues 4 to 23 (IKDVAKMAGVSTTTVSHVIN) constitute a DNA-binding region (H-T-H motif). Residues 48–56 (SAVARSLKV) mediate DNA binding. Residues Tyr-73, Lys-189, Thr-191, Phe-220, and Asp-274 each coordinate hypoxanthine.

As to quaternary structure, homodimer.

The protein operates within purine metabolism; purine nucleotide biosynthesis [regulation]. Functionally, is the main repressor of the genes involved in the de novo synthesis of purine nucleotides, regulating purB, purC, purEK, purF, purHD, purL, purMN and guaBA expression. PurR is allosterically activated to bind its cognate DNA by binding the purine corepressors, hypoxanthine or guanine, thereby effecting transcription repression. The polypeptide is HTH-type transcriptional repressor PurR (Mannheimia succiniciproducens (strain KCTC 0769BP / MBEL55E)).